Reading from the N-terminus, the 409-residue chain is Arginine deiminase (409 aa).

Cys-399 functions as the Amidino-cysteine intermediate in the catalytic mechanism.

This sequence belongs to the arginine deiminase family.

The protein resides in the cytoplasm. The enzyme catalyses L-arginine + H2O = L-citrulline + NH4(+). It participates in amino-acid degradation; L-arginine degradation via ADI pathway; carbamoyl phosphate from L-arginine: step 1/2. The sequence is that of Arginine deiminase from Borrelia garinii subsp. bavariensis (strain ATCC BAA-2496 / DSM 23469 / PBi) (Borreliella bavariensis).